A 398-amino-acid polypeptide reads, in one-letter code: Trans-2-enoyl-CoA reductase [NADH] (398 aa).

Residues 47-52, 74-75, 111-112, and 139-140 each bind NAD(+); these read GASSGF, FE, DA, and LA. Y225 serves as a coordination point for substrate. The active-site Proton donor is the Y235. NAD(+)-binding positions include K244 and 274-276; that span reads IVT.

The protein belongs to the TER reductase family. As to quaternary structure, monomer.

The enzyme catalyses a 2,3-saturated acyl-CoA + NAD(+) = a (2E)-enoyl-CoA + NADH + H(+). It functions in the pathway lipid metabolism; fatty acid biosynthesis. Involved in the fatty acid synthesis (FAS II). Catalyzes the reduction of a carbon-carbon double bond in an enoyl moiety that is covalently linked to a coenzyme A (CoA). This chain is Trans-2-enoyl-CoA reductase [NADH], found in Clostridium beijerinckii (strain ATCC 51743 / NCIMB 8052) (Clostridium acetobutylicum).